The chain runs to 116 residues: Secreted RxLR effector protein 9 (116 aa).

Residues 1–17 form the signal peptide; that stretch reads MRLIYIFMVSIVTTLHA. The RxLR-dEER signature appears at 49 to 64; the sequence is RILRGTDGNVNREQER.

The protein belongs to the RxLR effector family.

The protein resides in the secreted. It localises to the host cytoplasm. Its subcellular location is the host nucleus. In terms of biological role, effector that acts as a broad suppressor of cell death to interrupt plant immunity. Inhibits cell death induced by cell death-inducing proteins, including the PAMP elicitor INF1 from P.infestans. The chain is Secreted RxLR effector protein 9 from Plasmopara viticola (Downy mildew of grapevine).